Reading from the N-terminus, the 629-residue chain is Kelch-like protein 13 (629 aa).

A BTB domain is found at 66–135; that stretch reads CDVTLVPGDG…IYTAKLSLNM (70 aa). A BACK domain is found at 170–271; the sequence is CVEVGRIANT…TPQDLINYVQ (102 aa). Kelch repeat units follow at residues 315 to 363, 364 to 415, 416 to 462, 464 to 509, 511 to 561, and 562 to 610; these read HLVT…VIGN, FLYV…ALKG, HLYA…VYGG, MYIS…TVGD, LYVI…VFEN, and KIYV…TLTV.

In terms of assembly, component of the BCR(KLHL9-KLHL13) E3 ubiquitin ligase complex, at least composed of CUL3, KLHL9, KLHL13 and RBX1. Interacts with AURKB.

The protein operates within protein modification; protein ubiquitination. Substrate-specific adapter of a BCR (BTB-CUL3-RBX1) E3 ubiquitin-protein ligase complex required for mitotic progression and cytokinesis. The BCR(KLHL9-KLHL13) E3 ubiquitin ligase complex mediates the ubiquitination of AURKB and controls the dynamic behavior of AURKB on mitotic chromosomes and thereby coordinates faithful mitotic progression and completion of cytokinesis. The polypeptide is Kelch-like protein 13 (KLHL13) (Gallus gallus (Chicken)).